The chain runs to 550 residues: Eukaryotic translation initiation factor 3 subunit D-2 (550 aa).

The disordered stretch occupies residues 97 to 126 (RGRGFRPSVHNNPRNVRNQRGRKGNAMGNI). Residues 287–301 (KFDMLTVNETSQEPP) form an RNA gate region. The interval 530–550 (SDVSEEEESSEDKPFGLSMNN) is disordered.

This sequence belongs to the eIF-3 subunit D family. As to quaternary structure, component of the eukaryotic translation initiation factor 3 (eIF-3) complex. The eIF-3 complex interacts with pix.

It is found in the cytoplasm. Its function is as follows. mRNA cap-binding component of the eukaryotic translation initiation factor 3 (eIF-3) complex, which is involved in protein synthesis of a specialized repertoire of mRNAs and, together with other initiation factors, stimulates binding of mRNA and methionyl-tRNAi to the 40S ribosome. The eIF-3 complex specifically targets and initiates translation of a subset of mRNAs involved in cell proliferation. In the eIF-3 complex, eif3d specifically recognizes and binds the 7-methylguanosine cap of a subset of mRNAs. The protein is Eukaryotic translation initiation factor 3 subunit D-2 of Drosophila willistoni (Fruit fly).